The following is a 119-amino-acid chain: Large ribosomal subunit protein bL20 (119 aa).

This sequence belongs to the bacterial ribosomal protein bL20 family. In terms of assembly, part of the 50S ribosomal subunit.

Its function is as follows. Binds directly to 23S ribosomal RNA and is necessary for the in vitro assembly process of the 50S ribosomal subunit. It is not involved in the protein synthesizing functions of that subunit. The polypeptide is Large ribosomal subunit protein bL20 (rplT) (Bacillus subtilis (strain 168)).